The sequence spans 163 residues: Lipoprotein signal peptidase (163 aa).

The next 4 helical transmembrane spans lie at 9–29, 42–62, 67–87, and 93–113; these read AWPW…SKYL, ILPF…SFLG, WQII…ILWL, and SEIM…GNFI. Catalysis depends on residues Asp-123 and Asp-141. The helical transmembrane segment at 137 to 157 threads the bilayer; that stretch reads FNVADSAICVGVFLLIVHMLL.

Belongs to the peptidase A8 family.

It is found in the cell inner membrane. The enzyme catalyses Release of signal peptides from bacterial membrane prolipoproteins. Hydrolyzes -Xaa-Yaa-Zaa-|-(S,diacylglyceryl)Cys-, in which Xaa is hydrophobic (preferably Leu), and Yaa (Ala or Ser) and Zaa (Gly or Ala) have small, neutral side chains.. It participates in protein modification; lipoprotein biosynthesis (signal peptide cleavage). This protein specifically catalyzes the removal of signal peptides from prolipoproteins. This chain is Lipoprotein signal peptidase, found in Coxiella burnetii (strain RSA 493 / Nine Mile phase I).